The chain runs to 70 residues: Protease inhibitor HPI (70 aa).

Ala2 is subject to N-acetylalanine. Cys5 is modified (S-glutathionyl cysteine; alternate).

It belongs to the protease inhibitor I13 (potato type I serine protease inhibitor) family. In terms of assembly, monomer and homodimer; disulfide-linked. Post-translationally, occurs in 3 forms that differ in the modification of Cys-5, HPI-1 forms a homodimer through a disulfide bond, HPI-2a is modified by glutathionylation, and HPI-2b is covalently modified by addition of an unidentified adduct but not by a disulfide linkage.

Functionally, inhibitor of serine proteases, strongly inhibits subtilisin A and weakly inhibits trypsin. Does not inhibit chymotrypsin, papain, pepsin, pronase E, protease type XIII and thermolysin. HPI-1 inhibits subtilisin A with an Ki of 0.21 nM. HPI-2a inhibits subtilisin A with an Ki of 0.08 nM. HPI-2b inhibits subtilisin A with an Ki of 0.1 nM. The chain is Protease inhibitor HPI from Hevea brasiliensis (Para rubber tree).